The sequence spans 64 residues: Large ribosomal subunit protein bL32 (64 aa).

The tract at residues 1–20 (MALPKYKTSRANTHSRRANW) is disordered.

This sequence belongs to the bacterial ribosomal protein bL32 family.

This Bifidobacterium adolescentis (strain ATCC 15703 / DSM 20083 / NCTC 11814 / E194a) protein is Large ribosomal subunit protein bL32.